Consider the following 615-residue polypeptide: DNA mismatch repair protein MutL (615 aa).

The disordered stretch occupies residues 362–397 (HFAEPAVREPVAPRYSPAPASGSRPAAPWPNAQPGY). The span at 373–387 (APRYSPAPASGSRPA) shows a compositional bias: low complexity.

Belongs to the DNA mismatch repair MutL/HexB family.

In terms of biological role, this protein is involved in the repair of mismatches in DNA. It is required for dam-dependent methyl-directed DNA mismatch repair. May act as a 'molecular matchmaker', a protein that promotes the formation of a stable complex between two or more DNA-binding proteins in an ATP-dependent manner without itself being part of a final effector complex. The sequence is that of DNA mismatch repair protein MutL from Escherichia coli O81 (strain ED1a).